The following is a 366-amino-acid chain: Putative RING-H2 finger protein ATL21C (366 aa).

A signal peptide spans 1–23; sequence MTFSKQLFPFVFFLLFLVSLRHA. The helical transmembrane segment at 243–263 threads the bilayer; that stretch reads LVLVISLSAVTVFVFPTCIAI. An RING-type; atypical zinc finger spans residues 320-362; the sequence is CPICLSEYASKETVRFIPECDHCFHVECIDVWLKIHGSCPLCR.

This sequence belongs to the RING-type zinc finger family. ATL subfamily.

It is found in the membrane. The catalysed reaction is S-ubiquitinyl-[E2 ubiquitin-conjugating enzyme]-L-cysteine + [acceptor protein]-L-lysine = [E2 ubiquitin-conjugating enzyme]-L-cysteine + N(6)-ubiquitinyl-[acceptor protein]-L-lysine.. Its pathway is protein modification; protein ubiquitination. The sequence is that of Putative RING-H2 finger protein ATL21C (ATL21C) from Arabidopsis thaliana (Mouse-ear cress).